The following is a 354-amino-acid chain: tRNA dimethylallyltransferase (354 aa).

An ATP-binding site is contributed by 28-35 (GPTATGKS). 30–35 (TATGKS) contacts substrate. Positions 53–56 (DSRQ) are interaction with substrate tRNA.

This sequence belongs to the IPP transferase family. As to quaternary structure, monomer. Mg(2+) serves as cofactor.

The enzyme catalyses adenosine(37) in tRNA + dimethylallyl diphosphate = N(6)-dimethylallyladenosine(37) in tRNA + diphosphate. Catalyzes the transfer of a dimethylallyl group onto the adenine at position 37 in tRNAs that read codons beginning with uridine, leading to the formation of N6-(dimethylallyl)adenosine (i(6)A). This chain is tRNA dimethylallyltransferase, found in Synechococcus sp. (strain JA-2-3B'a(2-13)) (Cyanobacteria bacterium Yellowstone B-Prime).